The primary structure comprises 306 residues: Golgi to ER traffic protein 2 (306 aa).

Positions 1 to 18 (MSEISDAEKRRILREKRQ) are enriched in basic and acidic residues. A disordered region spans residues 1 to 100 (MSEISDAEKR…PPGSAEQQNG (100 aa)). Over 1–172 (MSEISDAEKR…VEAHNIAVNK (172 aa)) the chain is Cytoplasmic. The span at 34 to 57 (TGQTENSFLSTESPLDSRESTYPA) shows a compositional bias: polar residues. Residues 68-77 (DSTKQMDELL) show a composition bias toward basic and acidic residues. A compositionally biased stretch (low complexity) spans 78 to 90 (AKATSKTTSKASS). The span at 91–100 (PPGSAEQQNG) shows a compositional bias: polar residues. A helical transmembrane segment spans residues 173–193 (LKSYTILVKWLFFLLPYLYYI). Residues 194-214 (THSARDPFQHNAVNYVLDRSN) are Lumenal-facing. Residues 215–234 (FFTVFTTFEIVALSVYYQLL) form a helical membrane-spanning segment. Residues 235–281 (MSAEKSHNVNTLDNNSKILKLVSMVPPGLVPIPNLRGKVAQALQYWD) lie on the Cytoplasmic side of the membrane. A helical transmembrane segment spans residues 282–302 (VVSMYLTDLCFAIVLAGLFQY). Topologically, residues 303-306 (YHSM) are lumenal.

This sequence belongs to the GET2 family. In terms of assembly, component of the Golgi to ER traffic (GET) complex, which is composed of GET1, GET2 and GET3. Within the complex, GET1 and GET2 form a heterotetramer which is stabilized by phosphatidylinositol binding and which binds to the GET3 homodimer.

It is found in the endoplasmic reticulum membrane. Its subcellular location is the golgi apparatus membrane. Its function is as follows. Required for the post-translational delivery of tail-anchored (TA) proteins to the endoplasmic reticulum. Together with GET1, acts as a membrane receptor for soluble GET3, which recognizes and selectively binds the transmembrane domain of TA proteins in the cytosol. The GET complex cooperates with the HDEL receptor ERD2 to mediate the ATP-dependent retrieval of resident ER proteins that contain a C-terminal H-D-E-L retention signal from the Golgi to the ER. This Lachancea thermotolerans (strain ATCC 56472 / CBS 6340 / NRRL Y-8284) (Yeast) protein is Golgi to ER traffic protein 2.